The sequence spans 333 residues: Tetraacyldisaccharide 4'-kinase (333 aa).

60 to 67 (TVGGTGKT) contributes to the ATP binding site.

The protein belongs to the LpxK family.

It catalyses the reaction a lipid A disaccharide + ATP = a lipid IVA + ADP + H(+). It participates in glycolipid biosynthesis; lipid IV(A) biosynthesis; lipid IV(A) from (3R)-3-hydroxytetradecanoyl-[acyl-carrier-protein] and UDP-N-acetyl-alpha-D-glucosamine: step 6/6. Functionally, transfers the gamma-phosphate of ATP to the 4'-position of a tetraacyldisaccharide 1-phosphate intermediate (termed DS-1-P) to form tetraacyldisaccharide 1,4'-bis-phosphate (lipid IVA). The polypeptide is Tetraacyldisaccharide 4'-kinase (Pseudomonas putida (strain ATCC 700007 / DSM 6899 / JCM 31910 / BCRC 17059 / LMG 24140 / F1)).